A 484-amino-acid chain; its full sequence is Auxin transporter-like protein 2 (484 aa).

The Cytoplasmic segment spans residues Met1–Gln59. A helical membrane pass occupies residues Val60–Leu77. Over Ser78–Gly79 the chain is Extracellular. A helical transmembrane segment spans residues Ile80–Leu100. The Cytoplasmic segment spans residues Tyr101–Lys135. The chain crosses the membrane as a helical span at residues Ala136–Ala156. Residues Cys157 to Thr172 are Extracellular-facing. The chain crosses the membrane as a helical span at residues Trp173 to Tyr193. Over Arg194–Trp196 the chain is Cytoplasmic. The helical transmembrane segment at Ser197–Val217 threads the bilayer. Residues His218–Leu232 are Extracellular-facing. N-linked (GlcNAc...) asparagine glycosylation is present at Asn223. Residues Val233–Val253 form a helical membrane-spanning segment. At Glu254–Lys266 the chain is on the cytoplasmic side. The helical transmembrane segment at Tyr267 to Val287 threads the bilayer. Topologically, residues Tyr288–Ala314 are extracellular. Asn297 carries N-linked (GlcNAc...) asparagine glycosylation. A helical transmembrane segment spans residues Val315–Phe335. Residues Val336–Arg356 are Cytoplasmic-facing. A helical transmembrane segment spans residues Leu357–Asn377. Residue Ser378 is a topological domain, extracellular. The helical transmembrane segment at Ala379–Leu399 threads the bilayer. Over Thr400–Tyr425 the chain is Cytoplasmic. Residues Ile426–Ala446 form a helical membrane-spanning segment. Residues Ser447–His484 lie on the Extracellular side of the membrane.

Belongs to the amino acid/polyamine transporter 2 family. Amino acid/auxin permease (AAAP) (TC 2.A.18.1) subfamily. As to expression, shoots and roots of nodulating plants. Higher levels in roots, flowers and stems, lower in nodules, leaves, petioles and shoot apices.

The protein resides in the cell membrane. Functionally, carrier protein involved in proton-driven auxin influx. Mediates the formation of auxin gradient from developing leaves (site of auxin biosynthesis) to tips by contributing to the loading of auxin in vascular tissues and facilitating acropetal (base to tip) auxin transport within inner tissues of the root apex, and basipetal (tip to base) auxin transport within outer tissues of the root apex. May be involved in lateral roots and nodules formation. The sequence is that of Auxin transporter-like protein 2 (LAX2) from Medicago truncatula (Barrel medic).